Consider the following 291-residue polypeptide: 33 kDa chaperonin (291 aa).

Disulfide bonds link cysteine 235–cysteine 237 and cysteine 268–cysteine 271.

It belongs to the HSP33 family. Post-translationally, under oxidizing conditions two disulfide bonds are formed involving the reactive cysteines. Under reducing conditions zinc is bound to the reactive cysteines and the protein is inactive.

It is found in the cytoplasm. In terms of biological role, redox regulated molecular chaperone. Protects both thermally unfolding and oxidatively damaged proteins from irreversible aggregation. Plays an important role in the bacterial defense system toward oxidative stress. This chain is 33 kDa chaperonin, found in Streptococcus agalactiae serotype Ia (strain ATCC 27591 / A909 / CDC SS700).